The primary structure comprises 271 residues: Aquaporin-11 (271 aa).

The Cytoplasmic segment spans residues 1–14 (MSPLLGLRSELQDT). A helical transmembrane segment spans residues 15–35 (CTSLGLMLSVVLLMGLARVVA). Residues 36-41 (RQQLHR) are Lumenal-facing. A helical transmembrane segment spans residues 42-62 (PVAHAFVLEFLATFQLCCCTH). The Cytoplasmic portion of the chain corresponds to 63–74 (ELQLLSEQHPAH). Residues 75-95 (PTWTLTLVYFFSLVHGLTLVG) traverse the membrane as a helical segment. The Lumenal portion of the chain corresponds to 96–163 (TSSNPCGVMM…ACKNPIRVDL (68 aa)). The short motif at 99–101 (NPC) is the NPC element. The chain crosses the membrane as a helical span at residues 164–184 (LKAVITEAVCSFLFHSALLHF). Over 185-194 (QEVRTKLRIH) the chain is Cytoplasmic. The chain crosses the membrane as a helical span at residues 195 to 215 (LLAALITFLVYAGGSLTGAVF). The NPA motif lies at 216–218 (NPA). The Lumenal segment spans residues 216–234 (NPALALSLHFMCFDEAFPQ). Residues 235-255 (FFIVYWLAPSLGILLMILMFS) traverse the membrane as a helical segment. The Cytoplasmic segment spans residues 256–271 (FFLPWLHNNHTINKKE).

The protein belongs to the MIP/aquaporin (TC 1.A.8) family. AQP11/AQP12 subfamily. Homodimer; disulfide-linked. Homotetramer. Can also form homomultimer. Not glycosylated. Detected in the sperm head and tail (at protein level). Expressed in subcutaneous adipocytes. Expressed in testis, kidney and ejaculated spermatozoa.

The protein resides in the endoplasmic reticulum membrane. Its subcellular location is the cytoplasmic vesicle membrane. It is found in the cell membrane. It catalyses the reaction H2O(in) = H2O(out). The enzyme catalyses glycerol(in) = glycerol(out). The catalysed reaction is H2O2(out) = H2O2(in). Channel protein that facilitates the transport of water, glycerol and hydrogen peroxide across membrane of cell or organelles guaranteeing intracellular homeostasis in several organes like liver, kidney and brain. In situation of stress, participates in endoplasmic reticulum (ER) homeostasis by regulating redox homeostasis through the transport of hydrogen peroxide across the endoplasmic reticulum membrane thereby regulating the oxidative stress through the NADPH oxidase 2 pathway. Plays a role by maintaining an environment suitable for translation or protein foldings in the ER lumen namely by participating in the PKD1 glycosylation processing resulting in regulation of PKD1 membrane trafficking thereby preventing the accumulation of unfolding protein in ER. Plays a role in the proximal tubule function by regulating its endosomal acidification. May play a role in postnatal kidney development. The protein is Aquaporin-11 of Homo sapiens (Human).